Reading from the N-terminus, the 145-residue chain is Plastocyanin, chloroplastic (145 aa).

A chloroplast-targeting transit peptide spans 1–47 (MKATLRAPASRASAVRPVASLKAAAQRVASVAGVSVASLALTLAAHA). Residues 48–145 (DATVKLGADS…AGMVGKIIVQ (98 aa)) enclose the Plastocyanin-like domain. Histidine 85, cysteine 130, histidine 133, and methionine 138 together coordinate Cu cation.

The protein belongs to the plastocyanin family. Cu(2+) is required as a cofactor.

It is found in the plastid. The protein resides in the chloroplast thylakoid membrane. Participates in electron transfer between P700 and the cytochrome b6-f complex in photosystem I. This chain is Plastocyanin, chloroplastic (PETE), found in Chlamydomonas reinhardtii (Chlamydomonas smithii).